The sequence spans 273 residues: Putative phosphoenolpyruvate synthase regulatory protein (273 aa).

153 to 160 (GVSRCGKT) contacts ADP.

This sequence belongs to the pyruvate, phosphate/water dikinase regulatory protein family. PSRP subfamily.

The catalysed reaction is [pyruvate, water dikinase] + ADP = [pyruvate, water dikinase]-phosphate + AMP + H(+). It carries out the reaction [pyruvate, water dikinase]-phosphate + phosphate + H(+) = [pyruvate, water dikinase] + diphosphate. Its function is as follows. Bifunctional serine/threonine kinase and phosphorylase involved in the regulation of the phosphoenolpyruvate synthase (PEPS) by catalyzing its phosphorylation/dephosphorylation. This chain is Putative phosphoenolpyruvate synthase regulatory protein, found in Sodalis glossinidius (strain morsitans).